A 284-amino-acid chain; its full sequence is Acetylglutamate kinase (284 aa).

Substrate-binding positions include 66 to 67, Arg-88, and Asn-179; that span reads GG.

This sequence belongs to the acetylglutamate kinase family. ArgB subfamily.

The protein resides in the cytoplasm. It catalyses the reaction N-acetyl-L-glutamate + ATP = N-acetyl-L-glutamyl 5-phosphate + ADP. Its pathway is amino-acid biosynthesis; L-arginine biosynthesis; N(2)-acetyl-L-ornithine from L-glutamate: step 2/4. Catalyzes the ATP-dependent phosphorylation of N-acetyl-L-glutamate. This chain is Acetylglutamate kinase, found in Actinobacillus pleuropneumoniae serotype 7 (strain AP76).